The chain runs to 70 residues: Enhancer of split m6 protein (70 aa).

The protein is Enhancer of split m6 protein of Drosophila melanogaster (Fruit fly).